A 323-amino-acid polypeptide reads, in one-letter code: Lipoyl synthase (323 aa).

[4Fe-4S] cluster is bound by residues C65, C70, C76, C91, C95, C98, and S304. Residues 77–293 (FNNGTATFMI…KKEALSIGFT (217 aa)) enclose the Radical SAM core domain.

This sequence belongs to the radical SAM superfamily. Lipoyl synthase family. The cofactor is [4Fe-4S] cluster.

The protein resides in the cytoplasm. The catalysed reaction is [[Fe-S] cluster scaffold protein carrying a second [4Fe-4S](2+) cluster] + N(6)-octanoyl-L-lysyl-[protein] + 2 oxidized [2Fe-2S]-[ferredoxin] + 2 S-adenosyl-L-methionine + 4 H(+) = [[Fe-S] cluster scaffold protein] + N(6)-[(R)-dihydrolipoyl]-L-lysyl-[protein] + 4 Fe(3+) + 2 hydrogen sulfide + 2 5'-deoxyadenosine + 2 L-methionine + 2 reduced [2Fe-2S]-[ferredoxin]. Its pathway is protein modification; protein lipoylation via endogenous pathway; protein N(6)-(lipoyl)lysine from octanoyl-[acyl-carrier-protein]: step 2/2. Functionally, catalyzes the radical-mediated insertion of two sulfur atoms into the C-6 and C-8 positions of the octanoyl moiety bound to the lipoyl domains of lipoate-dependent enzymes, thereby converting the octanoylated domains into lipoylated derivatives. The protein is Lipoyl synthase of Buchnera aphidicola subsp. Acyrthosiphon pisum (strain APS) (Acyrthosiphon pisum symbiotic bacterium).